The primary structure comprises 172 residues: Putative phosphoesterase Bcer98_0945 (172 aa).

His34 serves as the catalytic Proton donor. 2 short sequence motifs (HXTX) span residues His34–Leu37 and His115–Ile118. Catalysis depends on His115, which acts as the Proton acceptor.

This sequence belongs to the 2H phosphoesterase superfamily. YjcG family.

The polypeptide is Putative phosphoesterase Bcer98_0945 (Bacillus cytotoxicus (strain DSM 22905 / CIP 110041 / 391-98 / NVH 391-98)).